The primary structure comprises 283 residues: N-terminal Xaa-Pro-Lys N-methyltransferase 2 (283 aa).

S-adenosyl-L-methionine contacts are provided by residues glycine 124, arginine 129, aspartate 146, 174-175 (LQ), and glutamine 190.

Belongs to the methyltransferase superfamily. NTM1 family.

The protein localises to the nucleus. The catalysed reaction is N-terminal L-alanyl-L-prolyl-L-lysyl-[protein] + S-adenosyl-L-methionine = N-terminal N-methyl-L-alanyl-L-prolyl-L-lysyl-[protein] + S-adenosyl-L-homocysteine + H(+). It catalyses the reaction N-terminal L-prolyl-L-prolyl-L-lysyl-[protein] + S-adenosyl-L-methionine = N-terminal N-methyl-L-prolyl-L-prolyl-L-lysyl-[protein] + S-adenosyl-L-homocysteine + H(+). The enzyme catalyses N-terminal L-seryl-L-prolyl-L-lysyl-[protein] + S-adenosyl-L-methionine = N-terminal N-methyl-L-seryl-L-prolyl-L-lysyl-[protein] + S-adenosyl-L-homocysteine + H(+). Functionally, alpha N-methyltransferase that methylates the N-terminus of target proteins containing the N-terminal motif [Ala/Pro/Ser]-Pro-Lys when the initiator Met is cleaved. Specifically catalyzes monomethylation of exposed alpha-amino group of Ala or Ser residue in the [Ala/Ser]-Pro-Lys motif and Pro in the Pro-Pro-Lys motif. Predominantly functions as a mono-methyltransferase but is also able to di-/tri-methylate the GPKRIA peptide and di-methylate the PPKRIA peptide (in vitro). May activate NTMT1 by priming its substrates for trimethylation. The chain is N-terminal Xaa-Pro-Lys N-methyltransferase 2 (Ntmt2) from Mus musculus (Mouse).